The sequence spans 82 residues: Polyketide biosynthesis acyl-carrier-protein AcpK (82 aa).

A Carrier domain is found at 4–79 (QRIFEVLITN…ELAEVLYDKV (76 aa)). O-(pantetheine 4'-phosphoryl)serine is present on Ser39.

In terms of processing, 4'-phosphopantetheine is transferred from CoA to a specific serine of apo-ACP by sfp.

It is found in the cytoplasm. It functions in the pathway antibiotic biosynthesis; bacillaene biosynthesis. In terms of biological role, involved in some intermediate steps for the synthesis of the antibiotic polyketide bacillaene which is involved in secondary metabolism. This is Polyketide biosynthesis acyl-carrier-protein AcpK (acpK) from Bacillus subtilis (strain 168).